The sequence spans 315 residues: DNA-directed RNA polymerase subunit alpha (315 aa).

The segment at 1-228 is alpha N-terminal domain (alpha-NTD); it reads MIEMEKPKVE…EHLNLFITLK (228 aa). The interval 245–315 is alpha C-terminal domain (alpha-CTD); sequence KEKVLEMTIE…LGLGLRPSDE (71 aa).

The protein belongs to the RNA polymerase alpha chain family. As to quaternary structure, homodimer. The RNAP catalytic core consists of 2 alpha, 1 beta, 1 beta' and 1 omega subunit. When a sigma factor is associated with the core the holoenzyme is formed, which can initiate transcription.

It carries out the reaction RNA(n) + a ribonucleoside 5'-triphosphate = RNA(n+1) + diphosphate. In terms of biological role, DNA-dependent RNA polymerase catalyzes the transcription of DNA into RNA using the four ribonucleoside triphosphates as substrates. This Alkaliphilus metalliredigens (strain QYMF) protein is DNA-directed RNA polymerase subunit alpha.